A 184-amino-acid polypeptide reads, in one-letter code: Chromophore lyase CpcS/CpeS 1 (184 aa).

This sequence belongs to the CpcS/CpeS biliprotein lyase family.

Covalently attaches a chromophore to Cys residue(s) of phycobiliproteins. The chain is Chromophore lyase CpcS/CpeS 1 from Synechococcus sp. (strain JA-3-3Ab) (Cyanobacteria bacterium Yellowstone A-Prime).